Reading from the N-terminus, the 204-residue chain is Ribosome maturation factor RimP (204 aa).

Residues 176 to 204 (GNFDESQFDEIEESEGEEADEAEQPPTKH) are disordered. Residues 181–198 (SQFDEIEESEGEEADEAE) are compositionally biased toward acidic residues.

Belongs to the RimP family.

Its subcellular location is the cytoplasm. Functionally, required for maturation of 30S ribosomal subunits. The chain is Ribosome maturation factor RimP from Cereibacter sphaeroides (strain ATCC 17029 / ATH 2.4.9) (Rhodobacter sphaeroides).